The primary structure comprises 319 residues: 4-hydroxy-3-methylbut-2-enyl diphosphate reductase (319 aa).

Residue C17 participates in [4Fe-4S] cluster binding. (2E)-4-hydroxy-3-methylbut-2-enyl diphosphate contacts are provided by H46 and H79. Residues H46 and H79 each coordinate dimethylallyl diphosphate. Isopentenyl diphosphate is bound by residues H46 and H79. Residue C101 coordinates [4Fe-4S] cluster. H129 contacts (2E)-4-hydroxy-3-methylbut-2-enyl diphosphate. Position 129 (H129) interacts with dimethylallyl diphosphate. H129 provides a ligand contact to isopentenyl diphosphate. E131 acts as the Proton donor in catalysis. A (2E)-4-hydroxy-3-methylbut-2-enyl diphosphate-binding site is contributed by T170. C200 provides a ligand contact to [4Fe-4S] cluster. 4 residues coordinate (2E)-4-hydroxy-3-methylbut-2-enyl diphosphate: S228, S229, N230, and S273. Positions 228, 229, 230, and 273 each coordinate dimethylallyl diphosphate. The isopentenyl diphosphate site is built by S228, S229, N230, and S273.

It belongs to the IspH family. [4Fe-4S] cluster serves as cofactor.

The enzyme catalyses isopentenyl diphosphate + 2 oxidized [2Fe-2S]-[ferredoxin] + H2O = (2E)-4-hydroxy-3-methylbut-2-enyl diphosphate + 2 reduced [2Fe-2S]-[ferredoxin] + 2 H(+). The catalysed reaction is dimethylallyl diphosphate + 2 oxidized [2Fe-2S]-[ferredoxin] + H2O = (2E)-4-hydroxy-3-methylbut-2-enyl diphosphate + 2 reduced [2Fe-2S]-[ferredoxin] + 2 H(+). It participates in isoprenoid biosynthesis; dimethylallyl diphosphate biosynthesis; dimethylallyl diphosphate from (2E)-4-hydroxy-3-methylbutenyl diphosphate: step 1/1. It functions in the pathway isoprenoid biosynthesis; isopentenyl diphosphate biosynthesis via DXP pathway; isopentenyl diphosphate from 1-deoxy-D-xylulose 5-phosphate: step 6/6. Catalyzes the conversion of 1-hydroxy-2-methyl-2-(E)-butenyl 4-diphosphate (HMBPP) into a mixture of isopentenyl diphosphate (IPP) and dimethylallyl diphosphate (DMAPP). Acts in the terminal step of the DOXP/MEP pathway for isoprenoid precursor biosynthesis. This is 4-hydroxy-3-methylbut-2-enyl diphosphate reductase from Cereibacter sphaeroides (strain ATCC 17025 / ATH 2.4.3) (Rhodobacter sphaeroides).